The chain runs to 267 residues: Phosphate import ATP-binding protein PstB 2 (267 aa).

One can recognise an ABC transporter domain in the interval 21–262 (LTTKDLHVYY…AKCQSTSDYV (242 aa)). 53 to 60 (GPSGCGKS) provides a ligand contact to ATP.

It belongs to the ABC transporter superfamily. Phosphate importer (TC 3.A.1.7) family. In terms of assembly, the complex is composed of two ATP-binding proteins (PstB), two transmembrane proteins (PstC and PstA) and a solute-binding protein (PstS).

The protein localises to the cell membrane. The catalysed reaction is phosphate(out) + ATP + H2O = ADP + 2 phosphate(in) + H(+). Functionally, part of the ABC transporter complex PstSACB involved in phosphate import. Responsible for energy coupling to the transport system. In Streptococcus agalactiae serotype Ia (strain ATCC 27591 / A909 / CDC SS700), this protein is Phosphate import ATP-binding protein PstB 2.